A 37-amino-acid polypeptide reads, in one-letter code: Large ribosomal subunit protein bL36 (37 aa).

The protein belongs to the bacterial ribosomal protein bL36 family.

This is Large ribosomal subunit protein bL36 from Dechloromonas aromatica (strain RCB).